A 476-amino-acid chain; its full sequence is Cytosolic iron-sulfur assembly component 3 (476 aa).

A2 carries the post-translational modification N-acetylalanine. [4Fe-4S] cluster contacts are provided by C24, C71, C74, C77, C190, C246, C395, and C399.

The protein belongs to the NARF family. As to quaternary structure, external component of the CIA complex. In the CIA complex, interacts directly with CIAO1 and MMS19.

Functionally, component of the cytosolic iron-sulfur protein assembly (CIA) complex, a multiprotein complex that mediates the incorporation of iron-sulfur cluster into extramitochondrial Fe/S proteins. Seems to negatively regulate the level of HIF1A expression, although this effect could be indirect. The sequence is that of Cytosolic iron-sulfur assembly component 3 from Rattus norvegicus (Rat).